Consider the following 662-residue polypeptide: MNQFKVISKFNPTGDQPKAIKSIAKGIEKREKFQTLIGVTGSGKTFTMANIIEKVQKPTLVLAHNKTLAAQLCSEFREFFPNNAVEYFVSYYDYYQPEAYVAQSDTYIEKDASINDEIDKLRHSATSALFERKDVIIVASVSCIYGLGNPEEYKKLTISLREGMEKDRDEIIKKLVEIQYERNDIDFSRGTFRVKGDVLDIFPASSSSKAVRVEFFGDEIDRIKEFDVLTGETITKLKHISIFPASHFATSKDRLEVAIKDIEEELEERVKELVSQDKILEAQRLKQRTNFDIEMMREVGYCTGIENYSRVLDGRAKGTPPQTLLDYFPQDFLLFIDESHVTLPQVKAMQAGDKSRKDSLVEYGFRLPCAYDNRPLTFKEFENKLNQVVFVSATPAKYELEYSTNTAEQVIRPTGLLDPEIIVKPVKGQIDDLYTSIQETIKRGFRILVTTLTKKMAEDLTDYLKEMGVKTRYLHSDIDTIERMKIIHDLRKGEFHVLVGINLLREGLDIPEVALVTILDADKEGFLRSETSLIQTVGRAARNSESKVIMYGDVITKSMEKTIKETNRRRKIQMEYNEEHGIVPKTIIKDIREVIQISDIAEERKEYDNLNEALKSYNNDIDKLIEKYEEEMKEAAQNLQFEKAAHLRDVIYKLKKDKETEL.

Residues 25–182 enclose the Helicase ATP-binding domain; the sequence is KGIEKREKFQ…KKLVEIQYER (158 aa). Residue 38 to 45 coordinates ATP; it reads GVTGSGKT. Residues 91–114 carry the Beta-hairpin motif; sequence YYDYYQPEAYVAQSDTYIEKDASI. Positions 429 to 595 constitute a Helicase C-terminal domain; that stretch reads QIDDLYTSIQ…TIIKDIREVI (167 aa). A UVR domain is found at 622 to 657; the sequence is DKLIEKYEEEMKEAAQNLQFEKAAHLRDVIYKLKKD.

The protein belongs to the UvrB family. In terms of assembly, forms a heterotetramer with UvrA during the search for lesions. Interacts with UvrC in an incision complex.

It localises to the cytoplasm. The UvrABC repair system catalyzes the recognition and processing of DNA lesions. A damage recognition complex composed of 2 UvrA and 2 UvrB subunits scans DNA for abnormalities. Upon binding of the UvrA(2)B(2) complex to a putative damaged site, the DNA wraps around one UvrB monomer. DNA wrap is dependent on ATP binding by UvrB and probably causes local melting of the DNA helix, facilitating insertion of UvrB beta-hairpin between the DNA strands. Then UvrB probes one DNA strand for the presence of a lesion. If a lesion is found the UvrA subunits dissociate and the UvrB-DNA preincision complex is formed. This complex is subsequently bound by UvrC and the second UvrB is released. If no lesion is found, the DNA wraps around the other UvrB subunit that will check the other stand for damage. The sequence is that of UvrABC system protein B from Clostridium botulinum (strain Langeland / NCTC 10281 / Type F).